The sequence spans 342 residues: RNA 3'-terminal phosphate cyclase (342 aa).

ATP is bound by residues Q103 and 283–287 (YLADQ). The Tele-AMP-histidine intermediate role is filled by H308.

Belongs to the RNA 3'-terminal cyclase family. Type 1 subfamily.

Its subcellular location is the cytoplasm. The enzyme catalyses a 3'-end 3'-phospho-ribonucleotide-RNA + ATP = a 3'-end 2',3'-cyclophospho-ribonucleotide-RNA + AMP + diphosphate. In terms of biological role, catalyzes the conversion of 3'-phosphate to a 2',3'-cyclic phosphodiester at the end of RNA. The mechanism of action of the enzyme occurs in 3 steps: (A) adenylation of the enzyme by ATP; (B) transfer of adenylate to an RNA-N3'P to produce RNA-N3'PP5'A; (C) and attack of the adjacent 2'-hydroxyl on the 3'-phosphorus in the diester linkage to produce the cyclic end product. The biological role of this enzyme is unknown but it is likely to function in some aspects of cellular RNA processing. This chain is RNA 3'-terminal phosphate cyclase, found in Shigella dysenteriae serotype 1 (strain Sd197).